Reading from the N-terminus, the 89-residue chain is Small ribosomal subunit protein uS17 (89 aa).

The protein belongs to the universal ribosomal protein uS17 family. In terms of assembly, part of the 30S ribosomal subunit.

One of the primary rRNA binding proteins, it binds specifically to the 5'-end of 16S ribosomal RNA. This is Small ribosomal subunit protein uS17 from Albidiferax ferrireducens (strain ATCC BAA-621 / DSM 15236 / T118) (Rhodoferax ferrireducens).